Here is a 116-residue protein sequence, read N- to C-terminus: Ribosome-binding factor A (116 aa).

Belongs to the RbfA family. Monomer. Binds 30S ribosomal subunits, but not 50S ribosomal subunits or 70S ribosomes.

The protein resides in the cytoplasm. One of several proteins that assist in the late maturation steps of the functional core of the 30S ribosomal subunit. Associates with free 30S ribosomal subunits (but not with 30S subunits that are part of 70S ribosomes or polysomes). Required for efficient processing of 16S rRNA. May interact with the 5'-terminal helix region of 16S rRNA. The sequence is that of Ribosome-binding factor A from Enterococcus faecalis (strain ATCC 700802 / V583).